A 337-amino-acid polypeptide reads, in one-letter code: Glyceraldehyde-3-phosphate dehydrogenase (337 aa).

NAD(+) is bound by residues 12 to 13 (RI), D34, and R79. Residues 150-152 (SCT), T181, 210-211 (TG), and R233 contribute to the D-glyceraldehyde 3-phosphate site. The Nucleophile role is filled by C151. Position 315 (N315) interacts with NAD(+).

Belongs to the glyceraldehyde-3-phosphate dehydrogenase family. Homotetramer.

Its subcellular location is the cytoplasm. It catalyses the reaction D-glyceraldehyde 3-phosphate + phosphate + NAD(+) = (2R)-3-phospho-glyceroyl phosphate + NADH + H(+). The protein operates within carbohydrate degradation; glycolysis; pyruvate from D-glyceraldehyde 3-phosphate: step 1/5. The protein is Glyceraldehyde-3-phosphate dehydrogenase (GPD) of Omphalotus olearius (Jack o'lantern).